A 571-amino-acid chain; its full sequence is Membrane protein insertase YidC (571 aa).

Residues 4 to 24 traverse the membrane as a helical segment; that stretch reads TRVFLIFAWLMVAVLLWMEWS. Residues 29–78 form a disordered region; that stretch reads APTPAPTTTSAPAAAQSVPGANPGAIPSAQVPGAPGQAAAQAQASATPAS. 2 stretches are compositionally biased toward low complexity: residues 34-43 and 55-78; these read PTTTSAPAAA and PSAQVPGAPGQAAAQAQASATPAS. The next 4 helical transmembrane spans lie at 369 to 389, 440 to 460, 483 to 503, and 518 to 538; these read LVGNWGWAIVGLVVLLKLVLY, GGCLPILIQMPIFFALYWVLV, YFILPVINVAVMWFTQKLTPA, and PLVFGVMMAFMPSGLVLYWVV.

Belongs to the OXA1/ALB3/YidC family. Type 1 subfamily. In terms of assembly, interacts with the Sec translocase complex via SecD. Specifically interacts with transmembrane segments of nascent integral membrane proteins during membrane integration.

It localises to the cell inner membrane. Required for the insertion and/or proper folding and/or complex formation of integral membrane proteins into the membrane. Involved in integration of membrane proteins that insert both dependently and independently of the Sec translocase complex, as well as at least some lipoproteins. Aids folding of multispanning membrane proteins. The protein is Membrane protein insertase YidC of Stenotrophomonas maltophilia (strain K279a).